Consider the following 304-residue polypeptide: bZIP transcription factor 50 (304 aa).

The Cytoplasmic segment spans residues 1-222 (MDVEFFADLD…MQESAVLTET (222 aa)). Disordered regions lie at residues 26 to 60 (GSGV…SREA) and 94 to 163 (GEEE…ERKK). Positions 45-59 (SPESVSSRRPSPSRE) are enriched in low complexity. Over residues 127–139 (EKEDVEAEVDGDD) the composition is skewed to acidic residues. The bZIP domain occupies 141–203 (MSKKKRRQMR…NMALRQSLLK (63 aa)). Positions 143-167 (KKKRRQMRNRDSAMKSRERKKMYVK) are basic motif. The span at 150 to 163 (RNRDSAMKSRERKK) shows a compositional bias: basic and acidic residues. Residues 169-183 (LETKSKYLEAECRRL) form a leucine-zipper region. Residues 223–243 (LPLVSLLWLVSIVCLLPVPGL) traverse the membrane as a helical segment. Residues 244–304 (PNRNPVARSS…GPFRLAAAAC (61 aa)) are Lumenal-facing.

The protein belongs to the bZIP family.

The protein localises to the endoplasmic reticulum membrane. It localises to the nucleus. Its activity is regulated as follows. Transcriptionally activated by IRE1 in response to endoplasmic reticulum (ER) stress. IRE1 cleaves a 20-bp fragment causing a frameshift of the mRNA transcript, leading to a nuclear isoform of the BZIP50 activator. Functionally, transcription factor involved in endoplasmic reticulum (ER) stress response. Acts downstream of the ER stress sensors IRE1, BZIP39 and BZIP60 to activate BiP chaperone genes. This Oryza sativa subsp. japonica (Rice) protein is bZIP transcription factor 50.